A 1212-amino-acid polypeptide reads, in one-letter code: MKLVVVESPAKAKTIEKYLGSGYQVLASYGHIRDLPSKDGSVNPDNGFSMVWQNYPDKAHRLKAIEDAVKESDSLILATDPDREGEAISWHILELLKTKKLLPDDVERVTFNAITKAAVTDAMAHPRQLDNDLINAYLARRALDYLVGFTLSPILWRKLPGAKSAGRVQSVALRLVVDREQEIEGFKPQEYWSVEADMEADSIGFTSRLIQWRGQKLEKLSIADKTQAEAAQSDVESGHFTVSNVETKPVSRNPQPPFTTSTLQQEAARKLGFAASHTMRLAQSLYEEGLITYMRTDGVQMDESAIAAARKTITQRYDGGYVPDKPRQYQVKAKNAQEAHEAIRPTDFSRDKAASGDHARLYELIWKRALASQMASAKLERTTVDLTDGTGQNVLRVTGQVVLFSGFLTLYEESADDNANDRDGKEGRARLPLLRAGDAPLKKEVRADQHFTQPPPRYSEASLVKKMEDLGIGRPSTYASVIQVLKDRAYVTLERNRFIPSEAGRLLTAFLERFFERYVSYDFTAGLEDSLDEISGGRADWQKVLDAFWHDFKPKTAEVMEQQPSAITAELDKFLEPWLFPDKGDGHDPRECPSCHTGRLALKGGRFGAFIACSNYPECKYTRGFGQGEDGVDDNEPVLLGYMPENSDDDGYMAFSDQGDILPANTASASETGVTDGGIAANAAFSGKGNSASHTDRDDLPFDPDEPASSTGNVASSQSRMTGDETASSGNSRDSSAHGVSTTAGIDAESQAGISNQALAGKNNAGRTAVSDNKGNNSSSTIAAARKGGSTDDNATVSDPDGDIGSGASSSGQDADNRLLSHRNGDIDSRAIPADHKDSSSDQNASHALSPDRNSDDASVSNSDKKIDSKAVSTGHDVGNAITSDNSPSDNVAHLASTPSSATSSVKVALETENNDTAASKADEQAKEEEESRKARAVTRRTGRFGPYIQLGEGKNAKRVSVPRDVNPREVDFSLASRLLALPREIGLHPESGKMIIAGTGRYGPYLNCDGKYARLSSTEELLDIDIDRAVVKLAEAAQNKGRTGATLSREPLKVFGDSPVTEKPVQLMNGRYGPYVTDGETNASLPKDTTPESLTFEEALALLEARAKMPKKKKTKKAAAKKPAAKKTTTKKAAPKKATTKTATPKSATTDNATSEDGDATPAKSPAKKAVAKKTTAKKPASKSATKKAPSSKTTAAKKTSKATPKDEVAE.

Residues 1–114 enclose the Toprim domain; that stretch reads MKLVVVESPA…DVERVTFNAI (114 aa). Mg(2+)-binding residues include Glu-7 and Asp-80. The 427-residue stretch at 130–556 folds into the Topo IA-type catalytic domain; sequence DNDLINAYLA…AFWHDFKPKT (427 aa). Positions 164 to 169 are interaction with DNA; it reads SAGRVQ. The O-(5'-phospho-DNA)-tyrosine intermediate role is filled by Tyr-293. The C4-type zinc finger occupies 592–619; that stretch reads CPSCHTGRLALKGGRFGAFIACSNYPEC. 3 disordered regions span residues 687 to 742, 758 to 937, and 1107 to 1212; these read GKGN…GVST, ALAG…KARA, and RAKM…EVAE. 2 stretches are compositionally biased toward polar residues: residues 708-742 and 770-782; these read ASST…GVST and VSDN…SSTI. The segment covering 815-840 has biased composition (basic and acidic residues); that stretch reads ADNRLLSHRNGDIDSRAIPADHKDSS. Composition is skewed to polar residues over residues 881 to 890 and 897 to 906; these read AITSDNSPSD and STPSSATSSV. The segment covering 921–934 has biased composition (basic and acidic residues); it reads KADEQAKEEEESRK. Residues 1109-1140 are compositionally biased toward basic residues; that stretch reads KMPKKKKTKKAAAKKPAAKKTTTKKAAPKKAT. Positions 1141-1151 are enriched in low complexity; it reads TKTATPKSATT. A compositionally biased stretch (basic residues) spans 1167-1182; sequence PAKKAVAKKTTAKKPA. The span at 1183-1199 shows a compositional bias: low complexity; that stretch reads SKSATKKAPSSKTTAAK.

It belongs to the type IA topoisomerase family. In terms of assembly, monomer. Requires Mg(2+) as cofactor.

It catalyses the reaction ATP-independent breakage of single-stranded DNA, followed by passage and rejoining.. Its function is as follows. Releases the supercoiling and torsional tension of DNA, which is introduced during the DNA replication and transcription, by transiently cleaving and rejoining one strand of the DNA duplex. Introduces a single-strand break via transesterification at a target site in duplex DNA. The scissile phosphodiester is attacked by the catalytic tyrosine of the enzyme, resulting in the formation of a DNA-(5'-phosphotyrosyl)-enzyme intermediate and the expulsion of a 3'-OH DNA strand. The free DNA strand then undergoes passage around the unbroken strand, thus removing DNA supercoils. Finally, in the religation step, the DNA 3'-OH attacks the covalent intermediate to expel the active-site tyrosine and restore the DNA phosphodiester backbone. The sequence is that of DNA topoisomerase 1 from Zymomonas mobilis subsp. mobilis (strain ATCC 31821 / ZM4 / CP4).